Here is an 859-residue protein sequence, read N- to C-terminus: Probable helicase A859L (859 aa).

The 172-residue stretch at Y178–A349 folds into the Helicase ATP-binding domain. Position 191–198 (M191–T198) interacts with ATP. The short motif at D298–H301 is the DEAH box element. The Helicase C-terminal domain maps to Q394 to S553.

This sequence belongs to the asfivirus helicase A859L family.

The chain is Probable helicase A859L from Ornithodoros (relapsing fever ticks).